We begin with the raw amino-acid sequence, 154 residues long: Prefoldin subunit 2 (154 aa).

Disordered regions lie at residues Met-1–Ala-20 and Leu-126–Ser-154. Residues Gly-9–Lys-18 are compositionally biased toward gly residues. The segment covering Leu-126 to Ser-139 has biased composition (basic and acidic residues). The segment covering Glu-140 to Ser-154 has biased composition (low complexity).

Belongs to the prefoldin subunit beta family. As to quaternary structure, heterohexamer of two PFD-alpha type and four PFD-beta type subunits. Component of the PAQosome complex which is responsible for the biogenesis of several protein complexes and which consists of R2TP complex members RUVBL1, RUVBL2, RPAP3 and PIH1D1, URI complex members PFDN2, PFDN6, PDRG1, UXT and URI1 as well as ASDURF, POLR2E and DNAAF10/WDR92. Interacts with URI1; the interaction is phosphorylation-dependent and occurs in a growth-dependent manner.

Its subcellular location is the nucleus. It localises to the cytoplasm. It is found in the mitochondrion. In terms of biological role, binds specifically to cytosolic chaperonin (c-CPN) and transfers target proteins to it. Binds to nascent polypeptide chain and promotes folding in an environment in which there are many competing pathways for nonnative proteins. The protein is Prefoldin subunit 2 (Pfdn2) of Mus musculus (Mouse).